A 432-amino-acid polypeptide reads, in one-letter code: Glutamate-1-semialdehyde 2,1-aminomutase 1 (432 aa).

K272 is modified (N6-(pyridoxal phosphate)lysine).

The protein belongs to the class-III pyridoxal-phosphate-dependent aminotransferase family. HemL subfamily. Homodimer. The cofactor is pyridoxal 5'-phosphate.

It localises to the cytoplasm. It catalyses the reaction (S)-4-amino-5-oxopentanoate = 5-aminolevulinate. The protein operates within porphyrin-containing compound metabolism; protoporphyrin-IX biosynthesis; 5-aminolevulinate from L-glutamyl-tRNA(Glu): step 2/2. The polypeptide is Glutamate-1-semialdehyde 2,1-aminomutase 1 (Exiguobacterium sibiricum (strain DSM 17290 / CCUG 55495 / CIP 109462 / JCM 13490 / 255-15)).